A 162-amino-acid polypeptide reads, in one-letter code: UPF0260 protein CC_3276 (162 aa).

It belongs to the UPF0260 family.

This Caulobacter vibrioides (strain ATCC 19089 / CIP 103742 / CB 15) (Caulobacter crescentus) protein is UPF0260 protein CC_3276.